The chain runs to 269 residues: MPELPEVEIIRRGIEPWVVGHIIQRAEIRNNQLRWPIDQEIISIHQRRVISLKRRAKYLLMQLHHGWIIIHFGMSGRLRILAHMLPPEKHDHIDLIMSNNCILRYTDPRRFGAWLWSNNLDKMSILNNLGVEPLSDQFDGHWLFTKSRNKSLLIKQFLMTNKLVVGIGNIYANEALFAAGILPSRASCSLKEQEALLLARSIKAILLSSIEEGGTTLRDFLQSDGRDGLFAKKLQVYGRHGEPCYTCGEFIQIAKYGQRSSFFCPSCQN.

Residue Pro-2 is the Schiff-base intermediate with DNA of the active site. Residue Glu-3 is the Proton donor of the active site. The active-site Proton donor; for beta-elimination activity is the Lys-57. His-90, Arg-109, and Lys-150 together coordinate DNA. The FPG-type zinc-finger motif lies at 235-269 (QVYGRHGEPCYTCGEFIQIAKYGQRSSFFCPSCQN). The Proton donor; for delta-elimination activity role is filled by Arg-259.

This sequence belongs to the FPG family. Monomer. Zn(2+) serves as cofactor.

The catalysed reaction is Hydrolysis of DNA containing ring-opened 7-methylguanine residues, releasing 2,6-diamino-4-hydroxy-5-(N-methyl)formamidopyrimidine.. It carries out the reaction 2'-deoxyribonucleotide-(2'-deoxyribose 5'-phosphate)-2'-deoxyribonucleotide-DNA = a 3'-end 2'-deoxyribonucleotide-(2,3-dehydro-2,3-deoxyribose 5'-phosphate)-DNA + a 5'-end 5'-phospho-2'-deoxyribonucleoside-DNA + H(+). Its function is as follows. Involved in base excision repair of DNA damaged by oxidation or by mutagenic agents. Acts as a DNA glycosylase that recognizes and removes damaged bases. Has a preference for oxidized purines, such as 7,8-dihydro-8-oxoguanine (8-oxoG). Has AP (apurinic/apyrimidinic) lyase activity and introduces nicks in the DNA strand. Cleaves the DNA backbone by beta-delta elimination to generate a single-strand break at the site of the removed base with both 3'- and 5'-phosphates. The protein is Formamidopyrimidine-DNA glycosylase of Baumannia cicadellinicola subsp. Homalodisca coagulata.